Reading from the N-terminus, the 244-residue chain is tRNA (guanine-N(1)-)-methyltransferase (244 aa).

S-adenosyl-L-methionine-binding positions include glycine 113 and 133–138; that span reads IGDFVL.

Belongs to the RNA methyltransferase TrmD family. Homodimer.

The protein localises to the cytoplasm. It carries out the reaction guanosine(37) in tRNA + S-adenosyl-L-methionine = N(1)-methylguanosine(37) in tRNA + S-adenosyl-L-homocysteine + H(+). In terms of biological role, specifically methylates guanosine-37 in various tRNAs. The sequence is that of tRNA (guanine-N(1)-)-methyltransferase from Bacillus pumilus (strain SAFR-032).